The primary structure comprises 285 residues: RNA polymerase sigma factor RpoH (285 aa).

The interval 53-122 (LILSHLRFVV…IHEYVLRNWR (70 aa)) is sigma-70 factor domain-2. An Interaction with polymerase core subunit RpoC motif is present at residues 77–80 (DLIQ). The segment at 229–281 (AMEGLDERSQDIIRARWLDEDNKSTLQELADRYGVSAERVRQLEKNAMKKLRA) is sigma-70 factor domain-4. A DNA-binding region (H-T-H motif) is located at residues 254 to 273 (LQELADRYGVSAERVRQLEK).

The protein belongs to the sigma-70 factor family. RpoH subfamily. As to quaternary structure, interacts with the RNA polymerase core enzyme.

It is found in the cytoplasm. In terms of biological role, sigma factors are initiation factors that promote the attachment of RNA polymerase to specific initiation sites and are then released. This sigma factor is involved in regulation of expression of heat shock genes. The polypeptide is RNA polymerase sigma factor RpoH (Enterobacter cloacae).